The sequence spans 135 residues: ATP synthase epsilon chain (135 aa).

Belongs to the ATPase epsilon chain family. As to quaternary structure, F-type ATPases have 2 components, CF(1) - the catalytic core - and CF(0) - the membrane proton channel. CF(1) has five subunits: alpha(3), beta(3), gamma(1), delta(1), epsilon(1). CF(0) has three main subunits: a, b and c.

The protein resides in the cell inner membrane. Functionally, produces ATP from ADP in the presence of a proton gradient across the membrane. The protein is ATP synthase epsilon chain of Rhizobium etli (strain CIAT 652).